The sequence spans 154 residues: MVTFSQKPAEVVKKWILIDAENLVLGRLATLVANRLRGKHKPTFTPHVDDGDNVIVINADKVVLTGKKYTDKKYYWHTGYIGGIKERTARQILEGRFPERIIEKAVERMIPRGPLGRRQMRNLRVYAGSQHPHEAQQPEALDVGTLNRKNKRIA.

Positions 129–154 are disordered; it reads SQHPHEAQQPEALDVGTLNRKNKRIA.

Belongs to the universal ribosomal protein uL13 family. Part of the 50S ribosomal subunit.

This protein is one of the early assembly proteins of the 50S ribosomal subunit, although it is not seen to bind rRNA by itself. It is important during the early stages of 50S assembly. This is Large ribosomal subunit protein uL13 from Bartonella bacilliformis (strain ATCC 35685 / KC583 / Herrer 020/F12,63).